Reading from the N-terminus, the 169-residue chain is N-alpha-acetyltransferase 50 (169 aa).

One can recognise an N-acetyltransferase domain in the interval 5-154 (IELGDVTPHN…DAHVLQKNLK (150 aa)). Tyr-30 contacts substrate. Tyr-72 is a catalytic residue. Position 74 (Met-74) interacts with substrate. 76–89 (LGCLAPYRRLGIGT) contributes to the acetyl-CoA binding site. A CoA-binding site is contributed by 78–89 (CLAPYRRLGIGT). The active site involves His-111. 116 to 125 (NESAIDFYRK) serves as a coordination point for CoA. Residues 137-140 (YYKR) form a substrate region.

It belongs to the acetyltransferase family. GNAT subfamily.

It is found in the cytoplasm. It localises to the nucleus. The catalysed reaction is N-terminal L-methionyl-L-alanyl-[protein] + acetyl-CoA = N-terminal N(alpha)-acetyl-L-methionyl-L-alanyl-[protein] + CoA + H(+). It catalyses the reaction N-terminal L-methionyl-L-seryl-[protein] + acetyl-CoA = N-terminal N(alpha)-acetyl-L-methionyl-L-seryl-[protein] + CoA + H(+). The enzyme catalyses N-terminal L-methionyl-L-valyl-[protein] + acetyl-CoA = N-terminal N(alpha)-acetyl-L-methionyl-L-valyl-[protein] + CoA + H(+). It carries out the reaction N-terminal L-methionyl-L-threonyl-[protein] + acetyl-CoA = N-terminal N(alpha)-acetyl-L-methionyl-L-threonyl-[protein] + CoA + H(+). The catalysed reaction is N-terminal L-methionyl-L-lysyl-[protein] + acetyl-CoA = N-terminal N(alpha)-acetyl-L-methionyl-L-lysyl-[protein] + CoA + H(+). It catalyses the reaction N-terminal L-methionyl-L-leucyl-[protein] + acetyl-CoA = N-terminal N(alpha)-acetyl-L-methionyl-L-leucyl-[protein] + CoA + H(+). The enzyme catalyses N-terminal L-methionyl-L-phenylalanyl-[protein] + acetyl-CoA = N-terminal N(alpha)-acetyl-L-methionyl-L-phenylalanyl-[protein] + CoA + H(+). It carries out the reaction N-terminal L-methionyl-L-tyrosyl-[protein] + acetyl-CoA = N-terminal N(alpha)-acetyl-L-methionyl-L-tyrosyl-[protein] + CoA + H(+). N-alpha-acetyltransferase that acetylates the N-terminus of proteins that retain their initiating methionine. Has a broad substrate specificity: able to acetylate the initiator methionine of most peptides, except for those with a proline in second position. Also displays N-epsilon-acetyltransferase activity by mediating acetylation of the side chain of specific lysines on proteins. The relevance of N-epsilon-acetyltransferase activity is however unclear. Required for sister chromatid cohesion during mitosis by promoting binding of CDCA5/sororin to cohesin. This Xenopus tropicalis (Western clawed frog) protein is N-alpha-acetyltransferase 50 (naa50).